The following is a 409-amino-acid chain: Phosphopentomutase (409 aa).

Mn(2+)-binding residues include aspartate 10, aspartate 302, histidine 307, aspartate 343, histidine 344, and histidine 355.

The protein belongs to the phosphopentomutase family. The cofactor is Mn(2+).

The protein resides in the cytoplasm. It catalyses the reaction 2-deoxy-alpha-D-ribose 1-phosphate = 2-deoxy-D-ribose 5-phosphate. It carries out the reaction alpha-D-ribose 1-phosphate = D-ribose 5-phosphate. Its pathway is carbohydrate degradation; 2-deoxy-D-ribose 1-phosphate degradation; D-glyceraldehyde 3-phosphate and acetaldehyde from 2-deoxy-alpha-D-ribose 1-phosphate: step 1/2. In terms of biological role, isomerase that catalyzes the conversion of deoxy-ribose 1-phosphate (dRib-1-P) and ribose 1-phosphate (Rib-1-P) to deoxy-ribose 5-phosphate (dRib-5-P) and ribose 5-phosphate (Rib-5-P), respectively. The chain is Phosphopentomutase from Chelativorans sp. (strain BNC1).